Here is a 425-residue protein sequence, read N- to C-terminus: Gamma-glutamyl phosphate reductase (425 aa).

The protein belongs to the gamma-glutamyl phosphate reductase family.

It is found in the cytoplasm. It catalyses the reaction L-glutamate 5-semialdehyde + phosphate + NADP(+) = L-glutamyl 5-phosphate + NADPH + H(+). The protein operates within amino-acid biosynthesis; L-proline biosynthesis; L-glutamate 5-semialdehyde from L-glutamate: step 2/2. Functionally, catalyzes the NADPH-dependent reduction of L-glutamate 5-phosphate into L-glutamate 5-semialdehyde and phosphate. The product spontaneously undergoes cyclization to form 1-pyrroline-5-carboxylate. The protein is Gamma-glutamyl phosphate reductase of Novosphingobium aromaticivorans (strain ATCC 700278 / DSM 12444 / CCUG 56034 / CIP 105152 / NBRC 16084 / F199).